Consider the following 351-residue polypeptide: Photosystem II D2 protein (351 aa).

Residues Thr39 to Thr59 traverse the membrane as a helical segment. His116 contributes to the chlorophyll a binding site. Residues Gly123–Pro139 form a helical membrane-spanning segment. Residues Gln128 and Asn141 each coordinate pheophytin a. A helical transmembrane segment spans residues Val151–His164. His196 is a chlorophyll a binding site. Residues Gly206–Ala226 form a helical membrane-spanning segment. A plastoquinone contacts are provided by His213 and Phe260. His213 serves as a coordination point for Fe cation. His267 provides a ligand contact to Fe cation. The chain crosses the membrane as a helical span at residues Gly277–Arg293.

Belongs to the reaction center PufL/M/PsbA/D family. As to quaternary structure, PSII is composed of 1 copy each of membrane proteins PsbA, PsbB, PsbC, PsbD, PsbE, PsbF, PsbH, PsbI, PsbJ, PsbK, PsbL, PsbM, PsbT, PsbX, PsbY, Psb30/Ycf12, peripheral proteins PsbO, CyanoQ (PsbQ), PsbU, PsbV and a large number of cofactors. It forms dimeric complexes. The cofactor is The D1/D2 heterodimer binds P680, chlorophylls that are the primary electron donor of PSII, and subsequent electron acceptors. It shares a non-heme iron and each subunit binds pheophytin, quinone, additional chlorophylls, carotenoids and lipids. There is also a Cl(-1) ion associated with D1 and D2, which is required for oxygen evolution. The PSII complex binds additional chlorophylls, carotenoids and specific lipids..

The protein localises to the cellular thylakoid membrane. The enzyme catalyses 2 a plastoquinone + 4 hnu + 2 H2O = 2 a plastoquinol + O2. Its function is as follows. Photosystem II (PSII) is a light-driven water:plastoquinone oxidoreductase that uses light energy to abstract electrons from H(2)O, generating O(2) and a proton gradient subsequently used for ATP formation. It consists of a core antenna complex that captures photons, and an electron transfer chain that converts photonic excitation into a charge separation. The D1/D2 (PsbA/PsbD) reaction center heterodimer binds P680, the primary electron donor of PSII as well as several subsequent electron acceptors. D2 is needed for assembly of a stable PSII complex. The polypeptide is Photosystem II D2 protein (Prochlorococcus marinus (strain MIT 9313)).